We begin with the raw amino-acid sequence, 120 residues long: Large ribosomal subunit protein uL18c (120 aa).

Belongs to the universal ribosomal protein uL18 family. As to quaternary structure, part of the 50S ribosomal subunit; contacts the 5S rRNA.

The protein resides in the plastid. The protein localises to the chloroplast. Binds 5S rRNA, forms part of the central protuberance of the 50S subunit. This Pyropia yezoensis (Susabi-nori) protein is Large ribosomal subunit protein uL18c (rpl18).